The primary structure comprises 338 residues: Phenylalanine--tRNA ligase alpha subunit (338 aa).

Residue glutamate 259 participates in Mg(2+) binding.

This sequence belongs to the class-II aminoacyl-tRNA synthetase family. Phe-tRNA synthetase alpha subunit type 1 subfamily. In terms of assembly, tetramer of two alpha and two beta subunits. Mg(2+) serves as cofactor.

Its subcellular location is the cytoplasm. The enzyme catalyses tRNA(Phe) + L-phenylalanine + ATP = L-phenylalanyl-tRNA(Phe) + AMP + diphosphate + H(+). The polypeptide is Phenylalanine--tRNA ligase alpha subunit (Herminiimonas arsenicoxydans).